Reading from the N-terminus, the 376-residue chain is UDP-N-acetylglucosamine--N-acetylmuramyl-(pentapeptide) pyrophosphoryl-undecaprenol N-acetylglucosamine transferase (376 aa).

UDP-N-acetyl-alpha-D-glucosamine is bound by residues 14–16 (TGG), Asn128, Arg169, Ser201, Ile256, and Gln301.

It belongs to the glycosyltransferase 28 family. MurG subfamily.

The protein resides in the cell inner membrane. The catalysed reaction is di-trans,octa-cis-undecaprenyl diphospho-N-acetyl-alpha-D-muramoyl-L-alanyl-D-glutamyl-meso-2,6-diaminopimeloyl-D-alanyl-D-alanine + UDP-N-acetyl-alpha-D-glucosamine = di-trans,octa-cis-undecaprenyl diphospho-[N-acetyl-alpha-D-glucosaminyl-(1-&gt;4)]-N-acetyl-alpha-D-muramoyl-L-alanyl-D-glutamyl-meso-2,6-diaminopimeloyl-D-alanyl-D-alanine + UDP + H(+). It functions in the pathway cell wall biogenesis; peptidoglycan biosynthesis. Its function is as follows. Cell wall formation. Catalyzes the transfer of a GlcNAc subunit on undecaprenyl-pyrophosphoryl-MurNAc-pentapeptide (lipid intermediate I) to form undecaprenyl-pyrophosphoryl-MurNAc-(pentapeptide)GlcNAc (lipid intermediate II). This Phocaeicola vulgatus (strain ATCC 8482 / DSM 1447 / JCM 5826 / CCUG 4940 / NBRC 14291 / NCTC 11154) (Bacteroides vulgatus) protein is UDP-N-acetylglucosamine--N-acetylmuramyl-(pentapeptide) pyrophosphoryl-undecaprenol N-acetylglucosamine transferase.